The chain runs to 555 residues: 4-coumarate--CoA ligase-like 9 (555 aa).

Ser-200, Ser-201, Gly-202, Thr-203, Thr-204, and Lys-208 together coordinate ATP. Position 248 (Tyr-248) interacts with (E)-4-coumaroyl-AMP. Residue Arg-269 coordinates CoA. Positions Asp-271–Glu-342 are SBD1. Ala-320 serves as a coordination point for (E)-4-coumaroyl-AMP. ATP-binding residues include Glu-342, Ala-343, Thr-347, Asp-431, and Arg-446. (E)-4-coumaroyl-AMP-binding residues include Ala-343 and Thr-347. Positions Ala-343 to Tyr-410 are SBD2. Lys-448 and Lys-452 together coordinate (E)-4-coumaroyl-AMP. Lys-454 and Gly-455 together coordinate CoA. An ATP-binding site is contributed by Lys-537.

It belongs to the ATP-dependent AMP-binding enzyme family. In terms of assembly, interacts with STS1. It depends on Mg(2+) as a cofactor.

The enzyme catalyses (E)-4-coumarate + ATP + CoA = (E)-4-coumaroyl-CoA + AMP + diphosphate. It carries out the reaction (E)-4-coumarate + ATP + H(+) = (E)-4-coumaroyl-AMP + diphosphate. It catalyses the reaction (E)-4-coumaroyl-AMP + CoA = (E)-4-coumaroyl-CoA + AMP + H(+). Carboxylate--CoA ligase that may use 4-coumarate as substrate. Follows a two-step reaction mechanism, wherein the carboxylate substrate first undergoes adenylation by ATP, followed by a thioesterification in the presence of CoA to yield the final CoA thioester. This chain is 4-coumarate--CoA ligase-like 9 (4CLL9), found in Oryza sativa subsp. japonica (Rice).